Reading from the N-terminus, the 87-residue chain is Small ribosomal subunit protein uS17 (87 aa).

Belongs to the universal ribosomal protein uS17 family. Part of the 30S ribosomal subunit.

In terms of biological role, one of the primary rRNA binding proteins, it binds specifically to the 5'-end of 16S ribosomal RNA. This Alcanivorax borkumensis (strain ATCC 700651 / DSM 11573 / NCIMB 13689 / SK2) protein is Small ribosomal subunit protein uS17.